Reading from the N-terminus, the 72-residue chain is uncharacterized protein (72 aa).

The disordered stretch occupies residues 1–53 (MTNEPSTSTPTSTSTSTSTSTSTSTTTLTSTSSTPTSTSTSTSTSTSTSTSTS).

This is an uncharacterized protein from Dictyostelium discoideum (Social amoeba).